The following is a 24-amino-acid chain: Brevinin-1PTb (24 aa).

Residues Cys-18 and Cys-24 are joined by a disulfide bond.

In terms of tissue distribution, expressed by the skin glands.

Its subcellular location is the secreted. Its function is as follows. Has antibacterial activity against the Gram-positive bacterium S.aureus ATCC 25923 and the Gram-negative bacterium E.coli ATCC 25726. This Pulchrana picturata (Malaysian fire frog) protein is Brevinin-1PTb.